We begin with the raw amino-acid sequence, 266 residues long: 26 kDa endochitinase 2 (266 aa).

The N-terminal stretch at 1 to 23 (MRSLAVVVAVVATVAMAIGTARG) is a signal peptide. 3 disulfide bridges follow: C46–C108, C120–C128, and C227–C259. E90 acts as the Proton donor in catalysis.

It belongs to the glycosyl hydrolase 19 family. Chitinase class II subfamily.

It carries out the reaction Random endo-hydrolysis of N-acetyl-beta-D-glucosaminide (1-&gt;4)-beta-linkages in chitin and chitodextrins.. In terms of biological role, defense against chitin-containing fungal pathogens. The chain is 26 kDa endochitinase 2 from Hordeum vulgare (Barley).